We begin with the raw amino-acid sequence, 189 residues long: Protein shisa-like-2A (189 aa).

The next 2 membrane-spanning stretches (helical) occupy residues 48–68 and 70–90; these read SFFP…LVGL and TAAV…YLFI. The interval 98–189 is disordered; that stretch reads LDPGLSLQTT…PTPGPHGPVP (92 aa). A compositionally biased stretch (polar residues) spans 140–171; it reads NTHLESNKKQTVSPTCLPQNQFMATVTASNIP.

It belongs to the shisa family.

The protein localises to the membrane. The polypeptide is Protein shisa-like-2A (Shisal2a) (Mus musculus (Mouse)).